The primary structure comprises 137 residues: Probable 4-amino-4-deoxy-L-arabinose-phosphoundecaprenol flippase subunit ArnF (137 aa).

The Cytoplasmic segment spans residues 1-5 (MNVPR). A helical membrane pass occupies residues 6 to 26 (GWLAALGSVLLVSAAQLGMRW). Residues 27-44 (GMSRLPLPEAWAGQTPEH) are Periplasmic-facing. The helical transmembrane segment at 45–65 (AALLAVALAVAAYAASLLCWL) threads the bilayer. Residues 66–76 (AALRHLPLGRA) lie on the Cytoplasmic side of the membrane. Residues 77–97 (YSLLSASYALVYLLAASLPAF) traverse the membrane as a helical segment. Over 98 to 100 (EET) the chain is Periplasmic. Residues 101–121 (FTTGKTLGVGLVVLGVLTVNA) traverse the membrane as a helical segment. The Cytoplasmic segment spans residues 122–137 (RRTAAAPAHHPSRKAL).

Belongs to the ArnF family. As to quaternary structure, heterodimer of ArnE and ArnF.

It localises to the cell inner membrane. It functions in the pathway bacterial outer membrane biogenesis; lipopolysaccharide biosynthesis. Functionally, translocates 4-amino-4-deoxy-L-arabinose-phosphoundecaprenol (alpha-L-Ara4N-phosphoundecaprenol) from the cytoplasmic to the periplasmic side of the inner membrane. The chain is Probable 4-amino-4-deoxy-L-arabinose-phosphoundecaprenol flippase subunit ArnF from Pseudomonas paraeruginosa (strain DSM 24068 / PA7) (Pseudomonas aeruginosa (strain PA7)).